Here is a 58-residue protein sequence, read N- to C-terminus: Small ribosomal subunit protein bS21 (58 aa).

Positions 36–58 are disordered; it reads EFYEKPSVKRKRKSEAARKRKKF. Residues 43 to 58 show a composition bias toward basic residues; it reads VKRKRKSEAARKRKKF.

Belongs to the bacterial ribosomal protein bS21 family.

The protein is Small ribosomal subunit protein bS21 of Streptococcus uberis (strain ATCC BAA-854 / 0140J).